The chain runs to 65 residues: Beta-defensin 41 (65 aa).

The signal sequence occupies residues 1–19; the sequence is MKFHLFFFILLFGATILTA. Cystine bridges form between Cys-35–Cys-63, Cys-42–Cys-56, and Cys-46–Cys-64.

It belongs to the beta-defensin family. Isoform 2 is epididymis-specific and expressed mainly in the proximal caput.

The protein localises to the secreted. In terms of biological role, has bactericidal activity. Isoform 2 may play a role in the antimicrobial protection of sperm and urogenital tract epithelia. The sequence is that of Beta-defensin 41 from Mus musculus (Mouse).